Reading from the N-terminus, the 364-residue chain is uncharacterized protein (364 aa).

This is an uncharacterized protein from Escherichia coli (strain K12).